Reading from the N-terminus, the 155-residue chain is Protein SprT-like (155 aa).

The region spanning 7 to 145 (QRHMEEVSLQ…GSCGGKLIQT (139 aa)) is the SprT-like domain. His67 is a binding site for Zn(2+). Glu68 is a catalytic residue. His71 is a Zn(2+) binding site.

Belongs to the SprT family. The cofactor is Zn(2+).

It localises to the cytoplasm. In Listeria monocytogenes serotype 4b (strain CLIP80459), this protein is Protein SprT-like.